Reading from the N-terminus, the 295-residue chain is 4-diphosphocytidyl-2-C-methyl-D-erythritol kinase (295 aa).

The active site involves lysine 22. 106-116 (PAGGGFGGGSS) serves as a coordination point for ATP. Aspartate 148 is an active-site residue.

This sequence belongs to the GHMP kinase family. IspE subfamily.

The enzyme catalyses 4-CDP-2-C-methyl-D-erythritol + ATP = 4-CDP-2-C-methyl-D-erythritol 2-phosphate + ADP + H(+). It participates in isoprenoid biosynthesis; isopentenyl diphosphate biosynthesis via DXP pathway; isopentenyl diphosphate from 1-deoxy-D-xylulose 5-phosphate: step 3/6. In terms of biological role, catalyzes the phosphorylation of the position 2 hydroxy group of 4-diphosphocytidyl-2C-methyl-D-erythritol. This Xanthomonas axonopodis pv. citri (strain 306) protein is 4-diphosphocytidyl-2-C-methyl-D-erythritol kinase.